A 1463-amino-acid chain; its full sequence is DNA polymerase III PolC-type (1463 aa).

The Exonuclease domain maps to 425-581 (YVVFDVETTG…YDAEATGRLL (157 aa)).

Belongs to the DNA polymerase type-C family. PolC subfamily.

The protein localises to the cytoplasm. The catalysed reaction is DNA(n) + a 2'-deoxyribonucleoside 5'-triphosphate = DNA(n+1) + diphosphate. Functionally, required for replicative DNA synthesis. This DNA polymerase also exhibits 3' to 5' exonuclease activity. The protein is DNA polymerase III PolC-type of Streptococcus pneumoniae serotype 4 (strain ATCC BAA-334 / TIGR4).